Here is a 439-residue protein sequence, read N- to C-terminus: Glutamine synthetase (439 aa).

In terms of domain architecture, GS beta-grasp spans 13 to 98; that stretch reads ENVRFIRLQF…VICDVYTPDG (86 aa). Residues 105–439 enclose the GS catalytic domain; the sequence is PRYRLRRMME…NWELQRYLYL (335 aa). Mg(2+) contacts are provided by Glu128 and Glu130. Glu180 lines the ATP pocket. Mg(2+) contacts are provided by Glu185 and Glu192. L-glutamate-binding positions include 236 to 237 and Gly237; that span reads NG. His241 lines the Mg(2+) pocket. ATP is bound by residues 243-245 and Ser245; that span reads HMS. L-glutamate is bound by residues Arg294, Glu300, and Arg312. 3 residues coordinate ATP: Arg312, Arg317, and Lys324. Glu329 contributes to the Mg(2+) binding site. Arg331 is an L-glutamate binding site.

Belongs to the glutamine synthetase family. Oligomer of 12 subunits arranged in the form of two hexagons. In its feedback-inhibited form, interacts with TnrA in order to block its DNA-binding activity. Mg(2+) serves as cofactor.

It localises to the cytoplasm. It carries out the reaction L-glutamate + NH4(+) + ATP = L-glutamine + ADP + phosphate + H(+). With respect to regulation, inhibited by glutamine. Glutamine synthetase (GS) is an unusual multitasking protein that functions as an enzyme, a transcription coregulator, and a chaperone in ammonium assimilation and in the regulation of genes involved in nitrogen metabolism. It catalyzes the ATP-dependent biosynthesis of glutamine from glutamate and ammonia. Feedback-inhibited GlnA also interacts with and regulates the activity of the transcriptional regulator TnrA. During nitrogen limitation, TnrA is in its DNA-binding active state and turns on the transcription of genes required for nitrogen assimilation. Under conditions of nitrogen excess, feedback-inhibited GlnA forms a stable complex with TnrA, which inhibits its DNA-binding activity. In contrast, feedback-inhibited GlnA acts as a chaperone to stabilize the DNA-binding activity of GlnR, which represses the transcription of nitrogen assimilation genes. The protein is Glutamine synthetase of Thermotoga maritima (strain ATCC 43589 / DSM 3109 / JCM 10099 / NBRC 100826 / MSB8).